A 1338-amino-acid chain; its full sequence is Apoptotic chromatin condensation inducer in the nucleus (1338 aa).

The interval 1-57 is disordered; sequence MWGRKRPNSSGETRGILSGNRGVDYGSGRGQSGPFEGRWRKLPKMPEAVGTDPSTSR. In terms of domain architecture, SAP spans 72–106; the sequence is LQALRVTDLKAALEQRGLAKSGQKSALVKRLKGAL. Phosphoserine occurs at positions 132, 166, 169, 208, 210, and 216. Residues 155 to 866 are disordered; it reads EAREAAELEE…ATQKKPSISI (712 aa). Positions 161–171 are enriched in acidic residues; that stretch reads ELEEASAESED. Over residues 219–228 the composition is skewed to basic and acidic residues; sequence EKPRKGERRS. A Phosphoserine modification is found at Ser-242. Position 253 is a phosphothreonine (Thr-253). A Glycyl lysine isopeptide (Lys-Gly) (interchain with G-Cter in SUMO1) cross-link involves residue Lys-267. Over residues 269–290 the composition is skewed to acidic residues; that stretch reads EEEEEEEEEEEDDDDEEEEEVD. Ser-295 carries the phosphoserine modification. Residues 313–353 are compositionally biased toward basic and acidic residues; sequence ERTRAKPEKVVDEKPLNIRSQEKGELEKGGRVTRSQEEARR. A Glycyl lysine isopeptide (Lys-Gly) (interchain with G-Cter in SUMO2) cross-link involves residue Lys-318. A phosphoserine mark is found at Ser-332 and Ser-369. A Glycyl lysine isopeptide (Lys-Gly) (interchain with G-Cter in SUMO2) cross-link involves residue Lys-378. A phosphoserine mark is found at Ser-387, Ser-389, Ser-391, and Ser-413. Thr-417 and Thr-423 each carry phosphothreonine. Over residues 425–434 the composition is skewed to polar residues; it reads EASSPPTHIQ. A phosphoserine mark is found at Ser-454, Ser-477, Ser-479, Ser-491, and Ser-497. The span at 506 to 518 shows a compositional bias: polar residues; the sequence is QKSSLPECSTQKG. Positions 542-559 are enriched in basic and acidic residues; sequence ITEEPMKKQSLEQKEGRR. A Phosphoserine modification is found at Ser-561. Low complexity-rich tracts occupy residues 573–603 and 646–662; these read SADSSSSRSSSPSSSSSPSRSPSPDSVASRP and RSASSSSRKSLSPGVSR. Residue Lys-654 is modified to N6,N6,N6-trimethyllysine; by EHMT2; alternate. Lys-654 bears the N6,N6-dimethyllysine; by EHMT2; alternate mark. Phosphoserine occurs at positions 655, 657, 710, and 729. Lys-732 participates in a covalent cross-link: Glycyl lysine isopeptide (Lys-Gly) (interchain with G-Cter in SUMO2). A compositionally biased stretch (polar residues) spans 744 to 754; it reads TQPQTSETQIS. 2 stretches are compositionally biased toward basic and acidic residues: residues 757–767 and 798–815; these read LESERTHHTVE and NDERPEGGAEEEEKKESS. 2 positions are modified to phosphoserine: Ser-825 and Ser-838. Positions 855-866 are enriched in polar residues; the sequence is TAATQKKPSISI. An N6-acetyllysine; alternate modification is found at Lys-861. A Glycyl lysine isopeptide (Lys-Gly) (interchain with G-Cter in SUMO2); alternate cross-link involves residue Lys-861. Lys-879 is covalently cross-linked (Glycyl lysine isopeptide (Lys-Gly) (interchain with G-Cter in SUMO2)). Basic and acidic residues predominate over residues 892-915; the sequence is ADDSRISEDETERNGDDGTHDKGL. The interval 892 to 950 is disordered; the sequence is ADDSRISEDETERNGDDGTHDKGLKICRTVTQVVPAEGQENGQREEEEEKEPEAELPAP. 2 positions are modified to phosphoserine: Ser-895 and Ser-898. The span at 936–945 shows a compositional bias: acidic residues; that stretch reads EEEEEKEPEA. Residue Lys-969 forms a Glycyl lysine isopeptide (Lys-Gly) (interchain with G-Cter in SUMO2) linkage. The residue at position 975 (Thr-975) is a Phosphothreonine. Ser-986, Ser-989, and Ser-1003 each carry phosphoserine. Residues Lys-1046 and Lys-1106 each participate in a glycyl lysine isopeptide (Lys-Gly) (interchain with G-Cter in SUMO2) cross-link. Disordered stretches follow at residues 1104-1214 and 1226-1338; these read ETKA…DDLF and LPLT…GGRR. The span at 1115 to 1129 shows a compositional bias: pro residues; it reads PLHPPPPPPVQPPPH. A compositionally biased stretch (basic and acidic residues) spans 1130–1174; sequence PRAEQREQERAVREQWAEREREMERRERTRSEREWDRDKVREGPR. The span at 1175–1192 shows a compositional bias: basic residues; that stretch reads SRSRSRDRRRKERAKSKE. Phosphoserine; by SRPK2 and PKB/AKT1 is present on Ser-1179. Basic and acidic residues-rich tracts occupy residues 1193 to 1214 and 1236 to 1317; these read KKSEKKEKAQEEPPAKLLDDLF and KEAE…DRRD. Positions 1209-1236 are sufficient for interaction with RNPS1 and SAP18 and formation of the ASAP complex; that stretch reads LLDDLFRKTKAAPCIYWLPLTESQIVQK.

Found in a mRNA splicing-dependent exon junction complex (EJC). Component of the heterotrimeric ASAP (apoptosis- and splicing-associated protein) complexes consisting of RNPS1, SAP18 and different isoforms of ACIN1; the association of SAP18 seems to require a preformed RNPS1:ACIN1 complex. Interacts with API5. Interacts with SRPK2 in a phosphorylation-dependent manner. Undergoes proteolytic cleavage; the processed form is active, contrary to the uncleaved form. In terms of processing, phosphorylation on Ser-1179 by SRPK2 up-regulates its stimulatory effect on cyclin A1.

It is found in the nucleus. Its subcellular location is the nucleus speckle. The protein localises to the nucleoplasm. In terms of biological role, auxiliary component of the splicing-dependent multiprotein exon junction complex (EJC) deposited at splice junction on mRNAs. The EJC is a dynamic structure consisting of core proteins and several peripheral nuclear and cytoplasmic associated factors that join the complex only transiently either during EJC assembly or during subsequent mRNA metabolism. Component of the ASAP complexes which bind RNA in a sequence-independent manner and are proposed to be recruited to the EJC prior to or during the splicing process and to regulate specific excision of introns in specific transcription subsets; ACIN1 confers RNA-binding to the complex. The ASAP complex can inhibit RNA processing during in vitro splicing reactions. The ASAP complex promotes apoptosis and is disassembled after induction of apoptosis. Involved in the splicing modulation of BCL2L1/Bcl-X (and probably other apoptotic genes); specifically inhibits formation of proapoptotic isoforms such as Bcl-X(S); the activity is different from the established EJC assembly and function. Induces apoptotic chromatin condensation after activation by CASP3. Regulates cyclin A1, but not cyclin A2, expression in leukemia cells. The sequence is that of Apoptotic chromatin condensation inducer in the nucleus (Acin1) from Mus musculus (Mouse).